Consider the following 325-residue polypeptide: MIARIWSGESPLWRLLLPLSWLYGLVSGAIRLSYKLGFKRAWRAPVPVVVVGNLTAGGNGKTPVVIWLVEKLQQRGVRVGVVSRGYGGKAAAYPLLLTPETTTAEAGDEPVLIYQRTGAPVAVAPERAAAVKAILAAHNVQIIITDDGLQHYRLARDIEIVVIDGVRRFGNGWWLPAGPMRERASRLKTVDAAIVNGGVARAGEIPMQLAPGLAVNLRTGARCDVAQLSNIVAMAGIGHPPRFFATLEACGAHPQKCVPLADHQTLAPADVQALVGEGQTLVMTEKDAVKCCAFAEDNWWFLPVDARLSGEQPDKLLEHITSLVR.

Residue 55–62 (TAGGNGKT) participates in ATP binding.

This sequence belongs to the LpxK family.

It carries out the reaction a lipid A disaccharide + ATP = a lipid IVA + ADP + H(+). The protein operates within glycolipid biosynthesis; lipid IV(A) biosynthesis; lipid IV(A) from (3R)-3-hydroxytetradecanoyl-[acyl-carrier-protein] and UDP-N-acetyl-alpha-D-glucosamine: step 6/6. Functionally, transfers the gamma-phosphate of ATP to the 4'-position of a tetraacyldisaccharide 1-phosphate intermediate (termed DS-1-P) to form tetraacyldisaccharide 1,4'-bis-phosphate (lipid IVA). The polypeptide is Tetraacyldisaccharide 4'-kinase (Salmonella newport (strain SL254)).